We begin with the raw amino-acid sequence, 642 residues long: Threonine--tRNA ligase (642 aa).

The TGS domain occupies 1-61 (MPVITLPDGS…ENDAQLAIIT (61 aa)). The interval 243-534 (DHRKIGKQLD…LTEEFAGFFP (292 aa)) is catalytic. Lys-286 carries the post-translational modification N6-acetyllysine. Residues Cys-334, His-385, and His-511 each coordinate Zn(2+).

This sequence belongs to the class-II aminoacyl-tRNA synthetase family. Homodimer. Zn(2+) is required as a cofactor.

The protein resides in the cytoplasm. It catalyses the reaction tRNA(Thr) + L-threonine + ATP = L-threonyl-tRNA(Thr) + AMP + diphosphate + H(+). In terms of biological role, catalyzes the attachment of threonine to tRNA(Thr) in a two-step reaction: L-threonine is first activated by ATP to form Thr-AMP and then transferred to the acceptor end of tRNA(Thr). Also edits incorrectly charged L-seryl-tRNA(Thr). This chain is Threonine--tRNA ligase, found in Escherichia fergusonii (strain ATCC 35469 / DSM 13698 / CCUG 18766 / IAM 14443 / JCM 21226 / LMG 7866 / NBRC 102419 / NCTC 12128 / CDC 0568-73).